A 160-amino-acid chain; its full sequence is Oocyte-secreted protein 4B (160 aa).

A signal peptide spans 1–13 (MKTSVLLAITAMC).

It belongs to the PLAC1 family.

It localises to the secreted. The sequence is that of Oocyte-secreted protein 4B from Homo sapiens (Human).